Reading from the N-terminus, the 350-residue chain is S-adenosylmethionine:tRNA ribosyltransferase-isomerase (350 aa).

It belongs to the QueA family. Monomer.

It localises to the cytoplasm. It carries out the reaction 7-aminomethyl-7-carbaguanosine(34) in tRNA + S-adenosyl-L-methionine = epoxyqueuosine(34) in tRNA + adenine + L-methionine + 2 H(+). It functions in the pathway tRNA modification; tRNA-queuosine biosynthesis. Its function is as follows. Transfers and isomerizes the ribose moiety from AdoMet to the 7-aminomethyl group of 7-deazaguanine (preQ1-tRNA) to give epoxyqueuosine (oQ-tRNA). This is S-adenosylmethionine:tRNA ribosyltransferase-isomerase from Vibrio campbellii (strain ATCC BAA-1116).